A 711-amino-acid chain; its full sequence is DNA ligase (711 aa).

Residues 1 to 29 (MSEDAIGQQVPAAQEAAAGAEPNSAARER) are disordered. A compositionally biased stretch (low complexity) spans 12 to 25 (AAQEAAAGAEPNSA). Residues 54 to 58 (DAAFD), 103 to 104 (SL), and E133 contribute to the NAD(+) site. The active-site N6-AMP-lysine intermediate is the K135. Residues R156, E197, K313, and K337 each contribute to the NAD(+) site. Residues C431, C434, C450, and C456 each contribute to the Zn(2+) site. Positions 620–709 (QGPRPLEGVT…PEAARAVARV (90 aa)) constitute a BRCT domain.

It belongs to the NAD-dependent DNA ligase family. LigA subfamily. The cofactor is Mg(2+). Mn(2+) is required as a cofactor.

It catalyses the reaction NAD(+) + (deoxyribonucleotide)n-3'-hydroxyl + 5'-phospho-(deoxyribonucleotide)m = (deoxyribonucleotide)n+m + AMP + beta-nicotinamide D-nucleotide.. DNA ligase that catalyzes the formation of phosphodiester linkages between 5'-phosphoryl and 3'-hydroxyl groups in double-stranded DNA using NAD as a coenzyme and as the energy source for the reaction. It is essential for DNA replication and repair of damaged DNA. The chain is DNA ligase from Salinispora tropica (strain ATCC BAA-916 / DSM 44818 / JCM 13857 / NBRC 105044 / CNB-440).